The chain runs to 442 residues: Proline--tRNA ligase (442 aa).

The protein belongs to the class-II aminoacyl-tRNA synthetase family. ProS type 2 subfamily. Homodimer.

Its subcellular location is the cytoplasm. The catalysed reaction is tRNA(Pro) + L-proline + ATP = L-prolyl-tRNA(Pro) + AMP + diphosphate. Catalyzes the attachment of proline to tRNA(Pro) in a two-step reaction: proline is first activated by ATP to form Pro-AMP and then transferred to the acceptor end of tRNA(Pro). This Brucella abortus (strain S19) protein is Proline--tRNA ligase.